The chain runs to 65 residues: Protein C' (65 aa).

It belongs to the rhabdoviruses C protein family.

Functionally, seems to stimulates transcription by the viral polymerase. May play a role in viral pathogenesis or transmission by insects vectors. The sequence is that of Protein C' (P) from Aedes (Bovine).